Reading from the N-terminus, the 85-residue chain is Small ribosomal subunit protein uS17 (85 aa).

This sequence belongs to the universal ribosomal protein uS17 family. In terms of assembly, part of the 30S ribosomal subunit.

In terms of biological role, one of the primary rRNA binding proteins, it binds specifically to the 5'-end of 16S ribosomal RNA. The protein is Small ribosomal subunit protein uS17 of Anaeromyxobacter dehalogenans (strain 2CP-1 / ATCC BAA-258).